The following is a 186-amino-acid chain: Oligoribonuclease (186 aa).

The Exonuclease domain occupies 12 to 175; sequence LIWIDLEMTG…DDIKDSIKEL (164 aa). Residue Y133 is part of the active site.

Belongs to the oligoribonuclease family.

It is found in the cytoplasm. Functionally, 3'-to-5' exoribonuclease specific for small oligoribonucleotides. The protein is Oligoribonuclease of Wigglesworthia glossinidia brevipalpis.